Reading from the N-terminus, the 563-residue chain is Probable tRNA (uracil-O(2)-)-methyltransferase (563 aa).

Residues 536–563 form a C3H1-type zinc finger; the sequence is TIRKAPCWMSLHHPDGCPVGQEACRYEH.

This sequence belongs to the TRM44 family.

Its subcellular location is the cytoplasm. The catalysed reaction is uridine(44) in tRNA(Ser) + S-adenosyl-L-methionine = 2'-O-methyluridine(44) in tRNA(Ser) + S-adenosyl-L-homocysteine + H(+). In terms of biological role, probable adenosyl-L-methionine (AdoMet)-dependent tRNA (uracil-O(2)-)-methyltransferase. This is Probable tRNA (uracil-O(2)-)-methyltransferase from Caenorhabditis elegans.